The following is a 427-amino-acid chain: Polyprenol-phosphate-mannose-dependent alpha-(1-2)-phosphatidylinositol mannoside mannosyltransferase (427 aa).

The next 10 helical transmembrane spans lie at 18–38 (LWCL…WRLF), 101–121 (ASVA…AIVL), 143–163 (WLAV…SSNF), 191–211 (LMLG…LYFL), 218–238 (AALT…VLAW), 279–299 (ERFA…IWAM), 308–328 (PTLA…VSWS), 331–346 (WVWM…LLGW), 351–371 (VALA…PIDL), and 386–406 (LAGM…GLTV).

Belongs to the glycosyltransferase 87 family.

The protein localises to the cell membrane. The protein operates within phospholipid metabolism; phosphatidylinositol metabolism. Functionally, responsible for the addition of alpha-(1-2) mannose branches to the linear mannan core on the biosynthetic pathway to mature lipoarabinomannan (LAM). In Mycobacterium tuberculosis (strain ATCC 25618 / H37Rv), this protein is Polyprenol-phosphate-mannose-dependent alpha-(1-2)-phosphatidylinositol mannoside mannosyltransferase.